The sequence spans 184 residues: Helix-loop-helix protein ngn-1 (184 aa).

The disordered stretch occupies residues 1–55; that stretch reads MYHHSPFYPHHLQTGEQDLDMERENDMDQNSKNSTQKPVKREKRRYRCRKRSPAT. Polar residues predominate over residues 28–37; the sequence is DQNSKNSTQK. Residues 38-52 are compositionally biased toward basic residues; sequence PVKREKRRYRCRKRS. Residues 62-75 form a basic motif region; sequence VRRDKANARERRRM. In terms of domain architecture, bHLH spans 62–114; the sequence is VRRDKANARERRRMNSLNDALEHLRGILPALPDEPKMTKIETLRKAQEYIASL. The segment at 76–114 is helix-loop-helix motif; that stretch reads NSLNDALEHLRGILPALPDEPKMTKIETLRKAQEYIASL. The disordered stretch occupies residues 164–184; sequence SNPPSQMYYHHHHQSPSFPHH. A compositionally biased stretch (basic residues) spans 172–184; it reads YHHHHQSPSFPHH.

Interacts with hlh-2; the interaction is direct.

Its subcellular location is the nucleus. Its function is as follows. Acts as a transcriptional regulator. Regulates expression of various genes, including homeobox protein unc-42 and helix-loop-helix protein hlh-34. Required for embryonic viability, neuromuscular development, organization of the nerve ring and neuronal cell body location. Regulates AIY neuron axon morphology and cell fate. Plays a role in cell autonomously establishing a neuronal left-right asymmetry. Involved in regulating glial specification. In Caenorhabditis elegans, this protein is Helix-loop-helix protein ngn-1.